Reading from the N-terminus, the 384-residue chain is MSSATSGEYWLISVPGEKGANDAWDKLNRSTGNTSTNSKYLIPDLKVGTLDQLVGLSDDLSKLDTSAEAVIRKLVQYFTEVLEEDKSKIAENLVIGNKDMKTYVTKFQWEGAKYPLKQSLKVLSEIIGKQISQIDNDLKVKSLTYNNLKNALASMDRKTVGSLLTKDLADLVKADDFVLNSEYLQTVIVVVPKISVKEWEQKYATLSSMVVPGSSKLLTEEGEHALYTVTLFKKVIDEFKNTARENKFIVRDFVYDEETLKAGRTERDKLMAEKQRQYAPLIRWLKINFGEIFAAYIHIKALRVFVESVLRYGLPVNFQAAVIEPAKGQQKKLRQELHKLYIHLDGSAAGPIDTLEDSPALMSLGVNEYYPYVFFKLNIDFLNK.

It belongs to the V-ATPase C subunit family. As to quaternary structure, V-ATPase is a heteromultimeric enzyme made up of two complexes: the ATP-hydrolytic V1 complex and the proton translocation V0 complex. The V1 complex consists of three catalytic AB heterodimers that form a heterohexamer, three peripheral stalks each consisting of EG heterodimers, one central rotor including subunits D and F, and the regulatory subunits C and H. The proton translocation complex V0 consists of the proton transport subunit a, a ring of proteolipid subunits c9c'', rotary subunit d, subunits e and f, and the accessory subunits vah-19/Ac45 and vah-20/PRR. Interacts with V-type proton ATPase subunits a1 unc-32, a2 vha-5 and a3 vha-6. As to expression, expressed ubiquitously; higher levels are found in gastrointestinal and hypodermal cells, as well as H-shaped excretory cell.

It localises to the cytoplasm. It is found in the membrane. Subunit of the V1 complex of vacuolar(H+)-ATPase (V-ATPase), a multisubunit enzyme composed of a peripheral complex (V1) that hydrolyzes ATP and a membrane integral complex (V0) that translocates protons. V-ATPase is responsible for acidifying and maintaining the pH of intracellular compartments and in some cell types, is targeted to the plasma membrane, where it is responsible for acidifying the extracellular environment. Subunit C is necessary for the assembly of the catalytic sector of the enzyme and is likely to have a specific function in its catalytic activity. Has roles in embryogenesis and ovulation. This is V-type proton ATPase subunit C from Caenorhabditis elegans.